A 361-amino-acid chain; its full sequence is Chorismate synthase (361 aa).

The disordered stretch occupies residues 37-59 (TEEDLQHDLDRRRPGTSRYTTPR). Positions 40-49 (DLQHDLDRRR) are enriched in basic and acidic residues. 2 residues coordinate NADP(+): arginine 48 and arginine 54. FMN contacts are provided by residues 125 to 127 (RSS), 238 to 239 (NA), glycine 278, 293 to 297 (KPTSS), and arginine 319.

The protein belongs to the chorismate synthase family. As to quaternary structure, homotetramer. It depends on FMNH2 as a cofactor.

It carries out the reaction 5-O-(1-carboxyvinyl)-3-phosphoshikimate = chorismate + phosphate. It functions in the pathway metabolic intermediate biosynthesis; chorismate biosynthesis; chorismate from D-erythrose 4-phosphate and phosphoenolpyruvate: step 7/7. Catalyzes the anti-1,4-elimination of the C-3 phosphate and the C-6 proR hydrogen from 5-enolpyruvylshikimate-3-phosphate (EPSP) to yield chorismate, which is the branch point compound that serves as the starting substrate for the three terminal pathways of aromatic amino acid biosynthesis. This reaction introduces a second double bond into the aromatic ring system. This is Chorismate synthase from Erwinia tasmaniensis (strain DSM 17950 / CFBP 7177 / CIP 109463 / NCPPB 4357 / Et1/99).